A 240-amino-acid chain; its full sequence is Bidirectional sugar transporter SWEET7c (240 aa).

Topologically, residues 1 to 12 (MVSPDLIRNVVG) are extracellular. In terms of domain architecture, MtN3/slv 1 spans 10 to 48 (VVGIVGNVISFGLFLSPVPIFWWIIKNKNVQNFKADPIL). A helical membrane pass occupies residues 13-33 (IVGNVISFGLFLSPVPIFWWI). At 34–46 (IKNKNVQNFKADP) the chain is on the cytoplasmic side. A helical membrane pass occupies residues 47–67 (ILVVTINGISLVIEAVYLTIF). Residues 68–78 (FLFSDKKNKKK) lie on the Extracellular side of the membrane. The helical transmembrane segment at 79 to 99 (MGVVLATEALFMAAVAVGVLL) threads the bilayer. Residues 100 to 108 (GAHTHQRRS) are Cytoplasmic-facing. Residues 109–129 (LIVGILCVIFGTIMYSSPLTI) form a helical membrane-spanning segment. The 82-residue stretch at 110–191 (IVGILCVIFG…LILYAIYYRT (82 aa)) folds into the MtN3/slv 2 domain. At 130-140 (MVVKTKSVEYM) the chain is on the extracellular side. The chain crosses the membrane as a helical span at residues 141-161 (PLLLSVVSFLNGLCWTLYALI). The Cytoplasmic segment spans residues 162-164 (RFD). A helical transmembrane segment spans residues 165–185 (IFITIPNGLGVLFAIMQLILY). Topologically, residues 186–240 (AIYYRTTPKKQDKNLELPTVAPIAKDTSIVAPVGNDDDVNGSTASHATINITIEP) are extracellular. N-linked (GlcNAc...) asparagine glycans are attached at residues N225 and N235.

Belongs to the SWEET sugar transporter family. In terms of assembly, forms homooligomers and/or heterooligomers.

Its subcellular location is the cell membrane. Functionally, mediates both low-affinity uptake and efflux of sugar across the plasma membrane. In Oryza sativa subsp. indica (Rice), this protein is Bidirectional sugar transporter SWEET7c (SWEET7C).